The sequence spans 100 residues: Large ribosomal subunit protein bL21 (100 aa).

The protein belongs to the bacterial ribosomal protein bL21 family. Part of the 50S ribosomal subunit. Contacts protein L20.

Its function is as follows. This protein binds to 23S rRNA in the presence of protein L20. The sequence is that of Large ribosomal subunit protein bL21 from Mycoplasma genitalium (strain ATCC 33530 / DSM 19775 / NCTC 10195 / G37) (Mycoplasmoides genitalium).